The chain runs to 537 residues: Oviduct-specific glycoprotein (537 aa).

Residues Leu-1–Ala-18 form the signal peptide. In terms of domain architecture, GH18 spans His-19–Asp-382. Cysteines 23 and 48 form a disulfide. Chitin-binding positions include Pro-68–Gln-69, Gly-95–Asn-98, Tyr-139, Leu-208–Asp-211, and Trp-352. Asn-399 carries N-linked (GlcNAc...) asparagine glycosylation. 2 disordered regions span residues Glu-446–Pro-475 and Thr-498–Leu-537. A compositionally biased stretch (basic and acidic residues) spans Gly-528–Leu-537.

This sequence belongs to the glycosyl hydrolase 18 family. As to expression, oviduct.

It is found in the cytoplasmic vesicle. It localises to the secretory vesicle. Its function is as follows. Binds to oocyte zona pellucida in vivo. May play a role in the fertilization process and/or early embryonic development. The sequence is that of Oviduct-specific glycoprotein (OVGP1) from Bos taurus (Bovine).